Reading from the N-terminus, the 99-residue chain is Transcription factor 1 (99 aa).

2 may be involved in preference for HM-URA DNA regions span residues 52–77 (PVAR…SVGV) and 90–99 (EGLKYEDFAK). DNA-binding regions lie at residues Phe-61 and 93 to 94 (KY).

This sequence belongs to the bacterial histone-like protein family. Homodimer.

Selectively binds to and inhibits the transcription of hydroxymethyluracil-(hmUra)-containing DNA, such as SP01 DNA, by RNA polymerase in vitro. This Bacillus phage SP01 (Bacteriophage SP01) protein is Transcription factor 1 (TF1).